The sequence spans 51 residues: Light-harvesting protein B-800/850 beta chain (51 aa).

Residues 2-23 (ADDANKVWPSGLTTAEAEELQK) lie on the Cytoplasmic side of the membrane. Residues 24 to 46 (GLVDGTRVFGVIAVLAHILAYAY) form a helical membrane-spanning segment. Residue His-40 coordinates a bacteriochlorophyll. Residues 47–51 (TPWLH) lie on the Periplasmic side of the membrane.

This sequence belongs to the antenna complex beta subunit family. In terms of assembly, an alpha/beta heterodimer conjugated to 3 bacteriochlorophyll molecules. The core complex is formed by different alpha and beta chains, binding bacteriochlorophyll molecules, and arranged most probably in tetrameric structures disposed around the reaction center. The non-pigmented gamma chains may constitute additional components.

The protein localises to the cell inner membrane. Its function is as follows. Antenna complexes are light-harvesting systems, which transfer the excitation energy to the reaction centers. This is Light-harvesting protein B-800/850 beta chain (pucB) from Rubrivivax gelatinosus (Rhodocyclus gelatinosus).